The following is a 436-amino-acid chain: GTPase Der (436 aa).

EngA-type G domains are found at residues 4 to 167 (PTVA…PVEE) and 175 to 351 (IRFS…ESQN). GTP-binding positions include 10–17 (GRPNVGKS), 57–61 (DTGGI), 119–122 (NKVD), 181–188 (GRPNVGKS), 229–233 (DTAGM), and 294–297 (NKWD). Positions 352–436 (KRIPSAVLND…PIHLIARKRK (85 aa)) constitute a KH-like domain.

The protein belongs to the TRAFAC class TrmE-Era-EngA-EngB-Septin-like GTPase superfamily. EngA (Der) GTPase family. As to quaternary structure, associates with the 50S ribosomal subunit.

In terms of biological role, GTPase that plays an essential role in the late steps of ribosome biogenesis. The chain is GTPase Der from Streptococcus pyogenes serotype M5 (strain Manfredo).